Consider the following 101-residue polypeptide: MAAKLKKGDKVVVLTGKDKGKQGEISAVFPKENKAVVDGINIAIRHQRQTQTSQGGRVAKAMPIDLSNLALLDKNGKATRVGFREEDGKKVRFAKTTGDVI.

It belongs to the universal ribosomal protein uL24 family. As to quaternary structure, part of the 50S ribosomal subunit.

Functionally, one of two assembly initiator proteins, it binds directly to the 5'-end of the 23S rRNA, where it nucleates assembly of the 50S subunit. One of the proteins that surrounds the polypeptide exit tunnel on the outside of the subunit. The polypeptide is Large ribosomal subunit protein uL24 (Paracoccus denitrificans (strain Pd 1222)).